Reading from the N-terminus, the 67-residue chain is Lantibiotic Flvbeta.b (67 aa).

Residues 1–34 constitute a propeptide, cleaved by FlvT; that stretch reads MDNNTKLQKLYEQLAATGSEKELDAMLDENMAGA. The residue at position 36 (Ser-36) is a 2,3-didehydroalanine (Ser); by FlvM2. Residues Thr-39 and Thr-43 each carry the 2,3-didehydrobutyrine; by FlvM2 modification. Cross-links (beta-methyllanthionine (Thr-Cys); by FlvM2) lie at residues 50-56, 58-61, and 62-65; these read TTGFDWC, TGAC, and TYSC.

Post-translationally, contains DL-beta-methyllanthionine, when coepressed in E.coli with the flavecin synthetase FlvM2.

It is found in the secreted. Lanthionine-containing peptide antibiotic (lantibiotic) only active on Gram-positive bacteria in synergy with Flvalpha.a. Is not active in absence of Flvalpha.a, which is encoded by the same operon than Flvbeta.b. The bactericidal activity of lantibiotics is based on depolarization of energized bacterial cytoplasmic membranes, initiated by the formation of aqueous transmembrane pores. The sequence is that of Lantibiotic Flvbeta.b from Ruminococcus flavefaciens.